Consider the following 304-residue polypeptide: Retrotransposon Gag-like protein 4 (304 aa).

The CCHC-type zinc finger occupies Gln-276 to Ala-293.

As to expression, in adults, expressed in brain, eye, kidney, ovary and testis. Weakly expressed in thymus, heart and muscle.

In terms of biological role, involved in cognitive function in the brain, possibly via the noradrenergic system. The chain is Retrotransposon Gag-like protein 4 from Mus musculus (Mouse).